Consider the following 341-residue polypeptide: tRNA N6-adenosine threonylcarbamoyltransferase (341 aa).

Fe cation contacts are provided by H111 and H115. Residues 134–138 (LVSGG), D167, G180, and N276 each bind substrate. D304 provides a ligand contact to Fe cation.

This sequence belongs to the KAE1 / TsaD family. Requires Fe(2+) as cofactor.

The protein resides in the cytoplasm. It carries out the reaction L-threonylcarbamoyladenylate + adenosine(37) in tRNA = N(6)-L-threonylcarbamoyladenosine(37) in tRNA + AMP + H(+). Functionally, required for the formation of a threonylcarbamoyl group on adenosine at position 37 (t(6)A37) in tRNAs that read codons beginning with adenine. Is involved in the transfer of the threonylcarbamoyl moiety of threonylcarbamoyl-AMP (TC-AMP) to the N6 group of A37, together with TsaE and TsaB. TsaD likely plays a direct catalytic role in this reaction. In Pseudomonas syringae pv. syringae (strain B728a), this protein is tRNA N6-adenosine threonylcarbamoyltransferase.